Consider the following 50-residue polypeptide: Protein PsbN (50 aa).

The chain crosses the membrane as a helical span at residues 14-34; the sequence is VAVTILAVLLALTGFGLWTAF.

The protein belongs to the PsbN family.

Its subcellular location is the cellular thylakoid membrane. Its function is as follows. May play a role in photosystem I and II biogenesis. The sequence is that of Protein PsbN from Prochlorococcus marinus (strain MIT 9515).